Consider the following 465-residue polypeptide: tRNA-2-methylthio-N(6)-dimethylallyladenosine synthase (465 aa).

Residues 5 to 125 enclose the MTTase N-terminal domain; the sequence is RKLHIKSYGC…LPELLKRAGN (121 aa). The [4Fe-4S] cluster site is built by Cys-14, Cys-50, Cys-88, Cys-166, Cys-170, and Cys-173. The Radical SAM core domain occupies 152-384; the sequence is RARGISAFVT…QELIDSQQSA (233 aa). One can recognise a TRAM domain in the interval 387–449; sequence KAAIGSTVDV…RYSFLGELVT (63 aa).

Belongs to the methylthiotransferase family. MiaB subfamily. In terms of assembly, monomer. The cofactor is [4Fe-4S] cluster.

The protein localises to the cytoplasm. The enzyme catalyses N(6)-dimethylallyladenosine(37) in tRNA + (sulfur carrier)-SH + AH2 + 2 S-adenosyl-L-methionine = 2-methylsulfanyl-N(6)-dimethylallyladenosine(37) in tRNA + (sulfur carrier)-H + 5'-deoxyadenosine + L-methionine + A + S-adenosyl-L-homocysteine + 2 H(+). Functionally, catalyzes the methylthiolation of N6-(dimethylallyl)adenosine (i(6)A), leading to the formation of 2-methylthio-N6-(dimethylallyl)adenosine (ms(2)i(6)A) at position 37 in tRNAs that read codons beginning with uridine. The sequence is that of tRNA-2-methylthio-N(6)-dimethylallyladenosine synthase from Bradyrhizobium diazoefficiens (strain JCM 10833 / BCRC 13528 / IAM 13628 / NBRC 14792 / USDA 110).